Here is a 107-residue protein sequence, read N- to C-terminus: Thioredoxin (107 aa).

Positions Ser-2–Ser-107 constitute a Thioredoxin domain. Active-site nucleophile residues include Cys-31 and Cys-34. Cysteines 31 and 34 form a disulfide.

It belongs to the thioredoxin family.

The protein resides in the plastid. It is found in the chloroplast. Participates in various redox reactions through the reversible oxidation of its active center dithiol to a disulfide and catalyzes dithiol-disulfide exchange reactions. The polypeptide is Thioredoxin (trxA) (Porphyra purpurea (Red seaweed)).